Reading from the N-terminus, the 386-residue chain is S-adenosylmethionine synthase (386 aa).

Histidine 16 provides a ligand contact to ATP. Aspartate 18 contacts Mg(2+). Glutamate 44 provides a ligand contact to K(+). Positions 57 and 100 each coordinate L-methionine. The tract at residues 100–110 is flexible loop; sequence QSRDITQGVDR. Residues 165–167, aspartate 240, 246–247, alanine 263, and lysine 267 contribute to the ATP site; these read DAK and RK. Aspartate 240 is an L-methionine binding site. Position 271 (lysine 271) interacts with L-methionine.

It belongs to the AdoMet synthase family. As to quaternary structure, homotetramer; dimer of dimers. The cofactor is Mg(2+). K(+) serves as cofactor.

The protein localises to the cytoplasm. The enzyme catalyses L-methionine + ATP + H2O = S-adenosyl-L-methionine + phosphate + diphosphate. Its pathway is amino-acid biosynthesis; S-adenosyl-L-methionine biosynthesis; S-adenosyl-L-methionine from L-methionine: step 1/1. Functionally, catalyzes the formation of S-adenosylmethionine (AdoMet) from methionine and ATP. The overall synthetic reaction is composed of two sequential steps, AdoMet formation and the subsequent tripolyphosphate hydrolysis which occurs prior to release of AdoMet from the enzyme. In Francisella tularensis subsp. tularensis (strain FSC 198), this protein is S-adenosylmethionine synthase.